We begin with the raw amino-acid sequence, 290 residues long: Phosphatidylserine decarboxylase proenzyme (290 aa).

Active-site charge relay system; for autoendoproteolytic cleavage activity residues include aspartate 96, histidine 153, and serine 257. Serine 257 (schiff-base intermediate with substrate; via pyruvic acid; for decarboxylase activity) is an active-site residue. Position 257 is a pyruvic acid (Ser); by autocatalysis (serine 257).

This sequence belongs to the phosphatidylserine decarboxylase family. PSD-B subfamily. Prokaryotic type I sub-subfamily. In terms of assembly, heterodimer of a large membrane-associated beta subunit and a small pyruvoyl-containing alpha subunit. The cofactor is pyruvate. Post-translationally, is synthesized initially as an inactive proenzyme. Formation of the active enzyme involves a self-maturation process in which the active site pyruvoyl group is generated from an internal serine residue via an autocatalytic post-translational modification. Two non-identical subunits are generated from the proenzyme in this reaction, and the pyruvate is formed at the N-terminus of the alpha chain, which is derived from the carboxyl end of the proenzyme. The autoendoproteolytic cleavage occurs by a canonical serine protease mechanism, in which the side chain hydroxyl group of the serine supplies its oxygen atom to form the C-terminus of the beta chain, while the remainder of the serine residue undergoes an oxidative deamination to produce ammonia and the pyruvoyl prosthetic group on the alpha chain. During this reaction, the Ser that is part of the protease active site of the proenzyme becomes the pyruvoyl prosthetic group, which constitutes an essential element of the active site of the mature decarboxylase.

It is found in the cell membrane. It carries out the reaction a 1,2-diacyl-sn-glycero-3-phospho-L-serine + H(+) = a 1,2-diacyl-sn-glycero-3-phosphoethanolamine + CO2. It participates in phospholipid metabolism; phosphatidylethanolamine biosynthesis; phosphatidylethanolamine from CDP-diacylglycerol: step 2/2. Functionally, catalyzes the formation of phosphatidylethanolamine (PtdEtn) from phosphatidylserine (PtdSer). This chain is Phosphatidylserine decarboxylase proenzyme, found in Haemophilus influenzae (strain ATCC 51907 / DSM 11121 / KW20 / Rd).